The sequence spans 89 residues: Small ribosomal subunit protein uS19 (89 aa).

The protein belongs to the universal ribosomal protein uS19 family.

In terms of biological role, protein S19 forms a complex with S13 that binds strongly to the 16S ribosomal RNA. The polypeptide is Small ribosomal subunit protein uS19 (Akkermansia muciniphila (strain ATCC BAA-835 / DSM 22959 / JCM 33894 / BCRC 81048 / CCUG 64013 / CIP 107961 / Muc)).